Here is a 124-residue protein sequence, read N- to C-terminus: ATP synthase subunit H, mitochondrial (124 aa).

Residues methionine 1–tyrosine 32 constitute a mitochondrion transit peptide. Residues asparagine 89–histidine 124 form a disordered region. Residues glutamate 100–histidine 124 are compositionally biased toward acidic residues.

The protein belongs to the ATPase h subunit family. In terms of assembly, F-type ATPases have 2 components, CF(1) - the catalytic core - and CF(0) - the membrane proton channel. In yeast, the dimeric form of ATP synthase consists of 17 polypeptides: alpha, beta, gamma, delta, epsilon, 4 (B), 5 (OSCP), 6 (A), 8, 9 (C), d, E (Tim11), f, g, h, i/j and k.

The protein localises to the mitochondrion. It is found in the mitochondrion inner membrane. In terms of biological role, mitochondrial membrane ATP synthase (F(1)F(0) ATP synthase or Complex V) produces ATP from ADP in the presence of a proton gradient across the membrane which is generated by electron transport complexes of the respiratory chain. F-type ATPases consist of two structural domains, F(1) - containing the extramembraneous catalytic core and F(0) - containing the membrane proton channel, linked together by a central stalk and a peripheral stalk. During catalysis, ATP synthesis in the catalytic domain of F(1) is coupled via a rotary mechanism of the central stalk subunits to proton translocation. Part of the complex F(0) domain. Minor subunit located with subunit a in the membrane. The polypeptide is ATP synthase subunit H, mitochondrial (ATP14) (Saccharomyces cerevisiae (strain ATCC 204508 / S288c) (Baker's yeast)).